A 159-amino-acid chain; its full sequence is Dynein 18 kDa light chain, flagellar outer arm (159 aa).

EF-hand domains lie at 18–53 (EEMD…LGQN), 54–89 (PTEE…NKQM), and 129–159 (ELTV…ALLS). 10 residues coordinate Ca(2+): Asp-31, Asp-33, Ser-35, Thr-37, Glu-42, Asp-67, Asp-69, Ser-71, Cys-73, and Glu-78.

Consists of at least 3 heavy chains (alpha, beta and gamma), 2 intermediate chains and 8 light chains.

It localises to the cell projection. The protein localises to the cilium. Its subcellular location is the flagellum. In terms of biological role, may be involved in the calcium-mediated regulation of dynein motor function. Binds 1 mole of calcium. This Chlamydomonas reinhardtii (Chlamydomonas smithii) protein is Dynein 18 kDa light chain, flagellar outer arm.